The chain runs to 226 residues: MLDRDGFRPNVGIILLNQRNQVFWGKRIRTHSWQFPQGGIDRGETPEQAMFRELHEEVGLQPCHVRVVARTRDWLRYEVPDRYIRRDARGHYKGQKQIWFLLQLVGHDWDLNLRATNHPEFDAWRWNDYWVPLDVVVEFKRGVYEMALTELARFLPRNDQRNRYLRSGMRQREGAPEVSLGTTTQLRTTSLLVHPGMELPPGASFDPDPRTGDGDPGMPGIHKPAG.

The Nudix hydrolase domain occupies 6–149 (GFRPNVGIIL…KRGVYEMALT (144 aa)). A Nudix box motif is present at residues 38–59 (GGIDRGETPEQAMFRELHEEVG). The segment at 197–226 (MELPPGASFDPDPRTGDGDPGMPGIHKPAG) is disordered.

The protein belongs to the Nudix hydrolase family. RppH subfamily. The cofactor is a divalent metal cation.

Functionally, accelerates the degradation of transcripts by removing pyrophosphate from the 5'-end of triphosphorylated RNA, leading to a more labile monophosphorylated state that can stimulate subsequent ribonuclease cleavage. This chain is RNA pyrophosphohydrolase, found in Paracidovorax citrulli (strain AAC00-1) (Acidovorax citrulli).